A 291-amino-acid chain; its full sequence is Taste receptor type 2 member 16 (291 aa).

A topological domain (extracellular) is located at residue methionine 1. A helical membrane pass occupies residues 2 to 22; the sequence is IPIQLTVFFMIIYVLESLTII. Over 23 to 41 the chain is Cytoplasmic; it reads VQSSLIVAVLGREWLQVRR. Residues 42–62 form a helical membrane-spanning segment; that stretch reads LMPVDMILISLGISRFCLQWA. The Extracellular portion of the chain corresponds to 63–84; sequence SMLNNFCSYLNLNYVLCNLTIT. Asparagine 80 carries an N-linked (GlcNAc...) asparagine glycan. A helical membrane pass occupies residues 85–105; sequence WEFFNILTFWLNSLLTVFYCI. Topologically, residues 106 to 125 are cytoplasmic; it reads KVSSFTHHIFLWVRWRILRW. A helical transmembrane segment spans residues 126–146; the sequence is FPWILLGSLTIACVTIIPSAI. The Extracellular portion of the chain corresponds to 147-182; it reads GNYIQIQLLTMEHLPRNSTVTDRLEKFHQYQFQSHT. N-linked (GlcNAc...) asparagine glycosylation occurs at asparagine 163. A helical transmembrane segment spans residues 183 to 203; the sequence is VALVIPFILFLASTILLMASL. Over 204–228 the chain is Cytoplasmic; it reads TKQIQHHSTGHCNPSMKAHFTALRS. A helical membrane pass occupies residues 229 to 249; that stretch reads LAILFIVFTSYFLIILITIIG. Residues 250–257 are Extracellular-facing; sequence TLFDKRCW. The chain crosses the membrane as a helical span at residues 258-278; it reads LWVWEAFVYAFILMHSTSLML. The Cytoplasmic portion of the chain corresponds to 279–291; that stretch reads SSPTLKRILKGKC.

Belongs to the G-protein coupled receptor T2R family. In terms of assembly, interacts with RTP3 and RTP4.

The protein localises to the cell membrane. Functionally, receptor that may play a role in the perception of bitterness and is gustducin-linked. May function as a bitter taste receptor for the phytonutrient beta glucopyranosides, some of which are toxic and some of which lower the risk of cancer and cardiovascular disease. The activity of this receptor may stimulate alpha gustducin, mediate PLC-beta-2 activation and lead to the gating of TRPM5. The sequence is that of Taste receptor type 2 member 16 (TAS2R16) from Pongo pygmaeus (Bornean orangutan).